A 598-amino-acid polypeptide reads, in one-letter code: Mitochondrial distribution and morphology protein 30 (598 aa).

The region spanning 13-59 (SFTIDHLPPEIWLCISKLVGTSDLHNLCLINRRLYLTITSDEIWKRR) is the F-box domain.

Interacts with SKP1. Component of the probable SCF(MDM30) complex containing CDC53, SKP1, RBX1 and MDM30. Interacts with SKP1 and FZO1.

Its subcellular location is the cytoplasm. The protein localises to the mitochondrion. It participates in protein modification; protein ubiquitination. Functionally, substrate recognition component of a SCF (SKP1-CUL1-F-box protein) E3 ubiquitin-protein ligase complex which mediates the ubiquitination and subsequent proteasomal degradation of target proteins. Probably recognizes and binds to phosphorylated target proteins. Recognizes FZO1 and regulates the amount of FZO1. Regulatory factor for the mitochondrial fusion machinery. Required for mitochondrial DNA maintenance. This chain is Mitochondrial distribution and morphology protein 30 (MDM30), found in Saccharomyces cerevisiae (strain ATCC 204508 / S288c) (Baker's yeast).